Consider the following 926-residue polypeptide: Alanine--tRNA ligase (926 aa).

Zn(2+) contacts are provided by His-615, His-619, Cys-719, and His-723. Residues 887 to 910 are disordered; it reads RVGGGGGGPPDFAQGGGPDADALD. The span at 888 to 904 shows a compositional bias: gly residues; that stretch reads VGGGGGGPPDFAQGGGP.

It belongs to the class-II aminoacyl-tRNA synthetase family. Requires Zn(2+) as cofactor.

The protein localises to the cytoplasm. The catalysed reaction is tRNA(Ala) + L-alanine + ATP = L-alanyl-tRNA(Ala) + AMP + diphosphate. Catalyzes the attachment of alanine to tRNA(Ala) in a two-step reaction: alanine is first activated by ATP to form Ala-AMP and then transferred to the acceptor end of tRNA(Ala). Also edits incorrectly charged Ser-tRNA(Ala) and Gly-tRNA(Ala) via its editing domain. This is Alanine--tRNA ligase from Halorubrum lacusprofundi (strain ATCC 49239 / DSM 5036 / JCM 8891 / ACAM 34).